The chain runs to 144 residues: Small ribosomal subunit protein bS6 (144 aa).

Residues 95-144 (ELEEGPSAMMQSKSRDDRPRRGEGDDRPRRDDREDRPRRDREPRRMEGGE) are disordered. Positions 107–144 (KSRDDRPRRGEGDDRPRRDDREDRPRRDREPRRMEGGE) are enriched in basic and acidic residues.

Belongs to the bacterial ribosomal protein bS6 family.

In terms of biological role, binds together with bS18 to 16S ribosomal RNA. The protein is Small ribosomal subunit protein bS6 of Paramagnetospirillum magneticum (strain ATCC 700264 / AMB-1) (Magnetospirillum magneticum).